A 200-amino-acid polypeptide reads, in one-letter code: MTDVALIDAGGANLGSVRYALERLGVDARLVRDAAGLQGAQRVILPGVGAAPEAMSRLRAQGLVEPLRELQVPLIGICLGMQLLFEHSEEGDVECLGLLPGIVRHMTPALGIRIPHMGWNQLVPMRDSALLAGLPERASAYFVHGYAAPVTADTVAACDHGGLFTAVVQNGLRCGAQFHPERSAETGARILRNFLEMSFP.

Residues 3-200 (DVALIDAGGA…LRNFLEMSFP (198 aa)) enclose the Glutamine amidotransferase type-1 domain. The active-site Nucleophile is Cys-78. Active-site residues include His-179 and Glu-181.

In terms of assembly, heterodimer of HisH and HisF.

It localises to the cytoplasm. It catalyses the reaction 5-[(5-phospho-1-deoxy-D-ribulos-1-ylimino)methylamino]-1-(5-phospho-beta-D-ribosyl)imidazole-4-carboxamide + L-glutamine = D-erythro-1-(imidazol-4-yl)glycerol 3-phosphate + 5-amino-1-(5-phospho-beta-D-ribosyl)imidazole-4-carboxamide + L-glutamate + H(+). The enzyme catalyses L-glutamine + H2O = L-glutamate + NH4(+). It participates in amino-acid biosynthesis; L-histidine biosynthesis; L-histidine from 5-phospho-alpha-D-ribose 1-diphosphate: step 5/9. Functionally, IGPS catalyzes the conversion of PRFAR and glutamine to IGP, AICAR and glutamate. The HisH subunit catalyzes the hydrolysis of glutamine to glutamate and ammonia as part of the synthesis of IGP and AICAR. The resulting ammonia molecule is channeled to the active site of HisF. This chain is Imidazole glycerol phosphate synthase subunit HisH, found in Xanthomonas axonopodis pv. citri (strain 306).